Here is a 78-residue protein sequence, read N- to C-terminus: APHSIANGFKNLLALAATTDVDSKEAETIKEYIKDPSKIAAAAAATAPAAETKKEEKKEEKKEETEESDDDIGLSLFH.

A compositionally biased stretch (low complexity) spans 40 to 50; the sequence is AAAAAATAPAA. The segment at 40–78 is disordered; that stretch reads AAAAAATAPAAETKKEEKKEEKKEETEESDDDIGLSLFH. Residues 51 to 64 show a composition bias toward basic and acidic residues; that stretch reads ETKKEEKKEEKKEE.

The protein belongs to the universal ribosomal protein uL10 family. P0 forms a pentameric complex by interaction with dimers of P1 and P2.

Its subcellular location is the nucleus. The protein localises to the cytoplasm. Functionally, ribosomal protein P0 is the functional equivalent of E.coli protein L10. In Culicoides nubeculosus (Biting midge), this protein is Large ribosomal subunit protein uL10.